The sequence spans 135 residues: Histone H1, macronuclear (135 aa).

Residues 1–17 are compositionally biased toward low complexity; sequence MPAKTATAVKRTTTTKK. Positions 1–135 are disordered; that stretch reads MPAKTATAVK…GGKKKSAKKN (135 aa). Basic residues-rich tracts occupy residues 18-54 and 62-79; these read SAAK…RRTP and KATK…RSAT. Positions 80 to 112 are enriched in low complexity; it reads KKTTAAPAAAAAPATDAPAAAATPSKATGSAKK. A compositionally biased stretch (basic residues) spans 113–135; it reads ASARKSSAKKPAKGGKKKSAKKN.

The protein resides in the nucleus. Its subcellular location is the chromosome. In terms of biological role, histones H1 are necessary for the condensation of nucleosome chains into higher-order structures. The polypeptide is Histone H1, macronuclear (Euplotes eurystomus (Ciliate)).